The chain runs to 422 residues: Monoacylglycerol lipase ABHD2 (422 aa).

Topologically, residues 1-15 are cytoplasmic; it reads MSAQLEADVRTMSPE. The chain crosses the membrane as a helical; Signal-anchor for type II membrane protein span at residues 16–36; it reads MPAMFDGMKLAAVAAVLYVIV. The Extracellular portion of the chain corresponds to 37–422; it reads RSLNLKCPTA…HKPQCHQQKE (386 aa). Residues 134-385 enclose the AB hydrolase-1 domain; it reads MVICPGIGNH…HGGHLGFFEG (252 aa). The N-linked (GlcNAc...) asparagine glycan is linked to Asn-142. Residue Ser-213 is the Nucleophile of the active site. N-linked (GlcNAc...) asparagine glycosylation is found at Asn-285, Asn-335, and Asn-344. Residues Asp-348 and His-379 each act as charge relay system in the active site.

This sequence belongs to the AB hydrolase superfamily. AB hydrolase 4 family.

The protein localises to the cell membrane. It catalyses the reaction Hydrolyzes glycerol monoesters of long-chain fatty acids.. It carries out the reaction an acetyl ester + H2O = an aliphatic alcohol + acetate + H(+). The catalysed reaction is a triacylglycerol + H2O = a diacylglycerol + a fatty acid + H(+). The enzyme catalyses 2-(5Z,8Z,11Z,14Z-eicosatetraenoyl)-glycerol + H2O = glycerol + (5Z,8Z,11Z,14Z)-eicosatetraenoate + H(+). It catalyses the reaction a butanoate ester + H2O = an aliphatic alcohol + butanoate + H(+). It carries out the reaction hexadecanoate ester + H2O = an aliphatic alcohol + hexadecanoate + H(+). Acylglycerol lipase activity is activated upon binding to progesterone. Its function is as follows. Progesterone-dependent acylglycerol lipase that catalyzes hydrolysis of endocannabinoid arachidonoylglycerol (AG) from cell membrane. Acts as a progesterone receptor: progesterone-binding activates the acylglycerol lipase activity, mediating degradation of 1-arachidonoylglycerol (1AG) and 2-arachidonoylglycerol (2AG) to glycerol and arachidonic acid (AA). Also displays an ester hydrolase activity against acetyl ester, butanoate ester and hexadecanoate ester. Plays a key role in sperm capacitation in response to progesterone by mediating degradation of 2AG, an inhibitor of the sperm calcium channel CatSper, leading to calcium influx via CatSper and sperm activation. May also play a role in smooth muscle cells migration. In Danio rerio (Zebrafish), this protein is Monoacylglycerol lipase ABHD2 (abhd2b).